We begin with the raw amino-acid sequence, 357 residues long: NADH-quinone oxidoreductase subunit H (357 aa).

8 helical membrane-spanning segments follow: residues 26-46 (LVKI…LTLW), 92-112 (ALFV…WAVI), 127-147 (LLFV…AGWA), 164-184 (MISY…VTGS), 203-223 (GLTF…IYII), 259-279 (FFLA…LMFL), 294-314 (VPGW…FIWF), and 329-349 (LGWK…AIWM).

The protein belongs to the complex I subunit 1 family. NDH-1 is composed of 14 different subunits. Subunits NuoA, H, J, K, L, M, N constitute the membrane sector of the complex.

The protein resides in the cell inner membrane. It carries out the reaction a quinone + NADH + 5 H(+)(in) = a quinol + NAD(+) + 4 H(+)(out). Its function is as follows. NDH-1 shuttles electrons from NADH, via FMN and iron-sulfur (Fe-S) centers, to quinones in the respiratory chain. The immediate electron acceptor for the enzyme in this species is believed to be ubiquinone. Couples the redox reaction to proton translocation (for every two electrons transferred, four hydrogen ions are translocated across the cytoplasmic membrane), and thus conserves the redox energy in a proton gradient. This subunit may bind ubiquinone. The chain is NADH-quinone oxidoreductase subunit H from Janthinobacterium sp. (strain Marseille) (Minibacterium massiliensis).